Here is a 466-residue protein sequence, read N- to C-terminus: Trigger factor (466 aa).

Residues 166-245 enclose the PPIase FKBP-type domain; the sequence is GDFAQIDLVA…LNAVKERELP (80 aa). 2 disordered regions span residues 313–332 and 424–466; these read LEQE…TESS and LPDD…AADK. Acidic residues predominate over residues 426-444; sequence DDGEAVDEDATPEDTDAPA. The segment covering 453–466 has biased composition (basic residues); the sequence is PKKKAAAKKKAADK.

The protein belongs to the FKBP-type PPIase family. Tig subfamily.

It localises to the cytoplasm. The enzyme catalyses [protein]-peptidylproline (omega=180) = [protein]-peptidylproline (omega=0). Its function is as follows. Involved in protein export. Acts as a chaperone by maintaining the newly synthesized protein in an open conformation. Functions as a peptidyl-prolyl cis-trans isomerase. This Leifsonia xyli subsp. xyli (strain CTCB07) protein is Trigger factor.